The sequence spans 248 residues: tRNA (guanine-N(1)-)-methyltransferase (248 aa).

S-adenosyl-L-methionine-binding positions include glycine 126 and 150-155; that span reads LGDYVL. The segment at 224-248 is disordered; sequence WRRTQQEERTRERRPDLWAAFDSED. The span at 227-239 shows a compositional bias: basic and acidic residues; sequence TQQEERTRERRPD.

Belongs to the RNA methyltransferase TrmD family. Homodimer.

The protein localises to the cytoplasm. It carries out the reaction guanosine(37) in tRNA + S-adenosyl-L-methionine = N(1)-methylguanosine(37) in tRNA + S-adenosyl-L-homocysteine + H(+). Functionally, specifically methylates guanosine-37 in various tRNAs. The sequence is that of tRNA (guanine-N(1)-)-methyltransferase from Micrococcus luteus (strain ATCC 4698 / DSM 20030 / JCM 1464 / CCM 169 / CCUG 5858 / IAM 1056 / NBRC 3333 / NCIMB 9278 / NCTC 2665 / VKM Ac-2230) (Micrococcus lysodeikticus).